The primary structure comprises 193 residues: Peptidyl-tRNA hydrolase (193 aa).

H17 is a binding site for tRNA. Catalysis depends on H22, which acts as the Proton acceptor. Residues F68, N70, and N116 each contribute to the tRNA site.

Belongs to the PTH family. In terms of assembly, monomer.

It localises to the cytoplasm. The enzyme catalyses an N-acyl-L-alpha-aminoacyl-tRNA + H2O = an N-acyl-L-amino acid + a tRNA + H(+). Functionally, hydrolyzes ribosome-free peptidyl-tRNAs (with 1 or more amino acids incorporated), which drop off the ribosome during protein synthesis, or as a result of ribosome stalling. Its function is as follows. Catalyzes the release of premature peptidyl moieties from peptidyl-tRNA molecules trapped in stalled 50S ribosomal subunits, and thus maintains levels of free tRNAs and 50S ribosomes. The protein is Peptidyl-tRNA hydrolase of Xanthomonas euvesicatoria pv. vesicatoria (strain 85-10) (Xanthomonas campestris pv. vesicatoria).